A 398-amino-acid chain; its full sequence is Tryptophan synthase beta chain (398 aa).

K87 bears the N6-(pyridoxal phosphate)lysine mark.

This sequence belongs to the TrpB family. Tetramer of two alpha and two beta chains. Pyridoxal 5'-phosphate is required as a cofactor.

The catalysed reaction is (1S,2R)-1-C-(indol-3-yl)glycerol 3-phosphate + L-serine = D-glyceraldehyde 3-phosphate + L-tryptophan + H2O. The protein operates within amino-acid biosynthesis; L-tryptophan biosynthesis; L-tryptophan from chorismate: step 5/5. The beta subunit is responsible for the synthesis of L-tryptophan from indole and L-serine. The polypeptide is Tryptophan synthase beta chain (Blochmanniella floridana).